Reading from the N-terminus, the 142-residue chain is 3-hydroxyacyl-[acyl-carrier-protein] dehydratase FabZ (142 aa).

Histidine 48 is an active-site residue.

It belongs to the thioester dehydratase family. FabZ subfamily.

The protein localises to the cytoplasm. It carries out the reaction a (3R)-hydroxyacyl-[ACP] = a (2E)-enoyl-[ACP] + H2O. In terms of biological role, involved in unsaturated fatty acids biosynthesis. Catalyzes the dehydration of short chain beta-hydroxyacyl-ACPs and long chain saturated and unsaturated beta-hydroxyacyl-ACPs. This is 3-hydroxyacyl-[acyl-carrier-protein] dehydratase FabZ from Desulforamulus reducens (strain ATCC BAA-1160 / DSM 100696 / MI-1) (Desulfotomaculum reducens).